Consider the following 328-residue polypeptide: D-cysteine desulfhydrase (328 aa).

K51 bears the N6-(pyridoxal phosphate)lysine mark.

The protein belongs to the ACC deaminase/D-cysteine desulfhydrase family. In terms of assembly, homodimer. The cofactor is pyridoxal 5'-phosphate.

The enzyme catalyses D-cysteine + H2O = hydrogen sulfide + pyruvate + NH4(+) + H(+). In terms of biological role, catalyzes the alpha,beta-elimination reaction of D-cysteine and of several D-cysteine derivatives. It could be a defense mechanism against D-cysteine. This Escherichia coli O157:H7 protein is D-cysteine desulfhydrase.